We begin with the raw amino-acid sequence, 72 residues long: Beta-defensin 104A (72 aa).

The first 22 residues, 1–22, serve as a signal peptide directing secretion; the sequence is MRRLVLLLAISLLLYQDLPVRS. Intrachain disulfides connect Cys30/Cys57, Cys37/Cys51, and Cys41/Cys58.

It belongs to the beta-defensin family.

Its subcellular location is the secreted. Functionally, has antimicrobial activity. The chain is Beta-defensin 104A (DEFB104A) from Pongo pygmaeus (Bornean orangutan).